Consider the following 91-residue polypeptide: Anther-specific protein RTS (91 aa).

Residues 1–21 (MVRVGAAAAVLVLAAAAAAMA) form the signal peptide.

Required for tapetum and pollen development. The polypeptide is Anther-specific protein RTS (Oryza sativa subsp. japonica (Rice)).